The following is a 185-amino-acid chain: uncharacterized protein (185 aa).

The first 29 residues, 1–29, serve as a signal peptide directing secretion; it reads MKNQEIIEVKSKMFLRIWAFVGSAGMGLA. Cysteine 30 carries N-palmitoyl cysteine lipidation. Cysteine 30 is lipidated: S-diacylglycerol cysteine. Residues 45 to 67 traverse the membrane as a helical segment; sequence YLLAIPAGFLFTLFCLYLFIIFF.

The protein to B.subtilis YfjE.

The protein resides in the cell membrane. This is an uncharacterized protein from Bacillus subtilis (strain 168).